The sequence spans 162 residues: Circumsporozoite protein-related antigen (162 aa).

The first 16 residues, 1 to 16, serve as a signal peptide directing secretion; that stretch reads MKILSVFFLALFFIIF. Disordered stretches follow at residues 24–44 and 109–162; these read KTNK…KGSG and PFKI…GPEH. A compositionally biased stretch (low complexity) spans 114 to 130; the sequence is SSDPADNANPDADSESN. Residues 137 to 162 are compositionally biased toward polar residues; that stretch reads PQVTAQDVTPEQPQGDDNNLVSGPEH.

The polypeptide is Circumsporozoite protein-related antigen (Plasmodium falciparum).